Reading from the N-terminus, the 496-residue chain is Fibronectin type III and SPRY domain-containing protein 1 (496 aa).

Positions 4–99 form a coiled coil; the sequence is QREALRKIIT…ALESSEELLE (96 aa). The 58-residue stretch at 105-162 folds into the COS domain; the sequence is LQASDSEDFSQAAKEIKDGITMAPAFRLSLKAKVSDNMSHLMVDFAQERQMLQALKFL. Residues 164–268 enclose the Fibronectin type-III domain; the sequence is VPSAPTIDLA…EPVTLETPAF (105 aa). The B30.2/SPRY domain occupies 290 to 477; it reads WDAMGGKVQD…VTTGLQVPSA (188 aa). The interval 301-336 is disordered; sequence KAREKEGKGRTASPVNSPARGTPSPKRMSSGRGGRD. An omega-N-methylarginine mark is found at Arg310 and Arg320.

In terms of assembly, oligomerization is required for binding to microtubules.

Its subcellular location is the cytoplasm. The protein localises to the cytoskeleton. It localises to the microtubule organizing center. It is found in the centrosome. The protein resides in the nucleus. Its subcellular location is the cleavage furrow. In terms of biological role, may be involved in microtubule organization and stabilization. The polypeptide is Fibronectin type III and SPRY domain-containing protein 1 (Fsd1) (Mus musculus (Mouse)).